The sequence spans 1214 residues: Zinc finger E-box-binding homeobox 2 (1214 aa).

Residues 1–101 are disordered; that stretch reads MKQPIMADGP…GVEHPWHNNE (101 aa). Residues 12 to 24 show a composition bias toward basic residues; the sequence is CKRRKQANPRRKN. A compositionally biased stretch (polar residues) spans 57 to 74; it reads DQETSPASVPNHESSPHV. The span at 89-98 shows a compositional bias: basic and acidic residues; the sequence is REGGVEHPWH. Residue serine 142 is modified to Phosphoserine. 3 C2H2-type zinc fingers span residues 211–234, 241–263, and 282–304; these read LTCPYCDRGYKRLTSLKEHIKYRH, FSCPLCSYTFAYRTQLERHMVTH, and FKCTECGKAFKYKHHLKEHLRIH. The segment at 310 to 334 adopts a C2H2-type 4; atypical zinc-finger fold; that stretch reads YECPNCKKRFSHSGSYSSHISSKKC. Phosphoserine is present on residues serine 356, serine 360, and serine 364. Residue lysine 377 is modified to N6-acetyllysine. Lysine 391 is covalently cross-linked (Glycyl lysine isopeptide (Lys-Gly) (interchain with G-Cter in SUMO); alternate). Residue lysine 391 forms a Glycyl lysine isopeptide (Lys-Gly) (interchain with G-Cter in SUMO2); alternate linkage. The SMAD-MH2 binding domain stretch occupies residues 437–487; sequence QHLGVGMEAPLLGFPTMNSNLSEVQKVLQIVDNTVSRQKMDCKAEEISKLK. Residues lysine 479 and lysine 555 each participate in a glycyl lysine isopeptide (Lys-Gly) (interchain with G-Cter in SUMO2) cross-link. The C2H2-type 5; atypical zinc finger occupies 581–605; that stretch reads FSCQFCKESFPGPIPLHQHERYLCK. Residues lysine 611 and lysine 632 each participate in a glycyl lysine isopeptide (Lys-Gly) (interchain with G-Cter in SUMO2) cross-link. A DNA-binding region (homeobox; atypical) is located at residues 644–703; the sequence is GMTSPINPYKDHMSVLKAYYAMNMEPNSDELLKISIAVGLPQEFVKEWFEQRKVYQYSNS. The residue at position 647 (serine 647) is a Phosphoserine. The span at 702–715 shows a compositional bias: low complexity; that stretch reads NSRSPSLERSSKPL. Disordered regions lie at residues 702–740, 771–810, and 832–857; these read NSRSPSLERSSKPLAPNSNPPTKDSLLPRSPVKPMDSIT, PVEKLDHSRSNTPSPLNLSSTSSKNSHSSSYTPNSFSSEE, and ATKNKTKASSISLDHNSVSSSSENSD. Residue lysine 713 forms a Glycyl lysine isopeptide (Lys-Gly) (interchain with G-Cter in SUMO2) linkage. Phosphoserine occurs at positions 731 and 780. 2 stretches are compositionally biased toward low complexity: residues 780 to 808 and 840 to 854; these read SNTPSPLNLSSTSSKNSHSSSYTPNSFSS and SSISLDHNSVSSSSE. Residue threonine 782 is modified to Phosphothreonine. Serine 784 carries the phosphoserine modification. Lysine 866 is covalently cross-linked (Glycyl lysine isopeptide (Lys-Gly) (interchain with G-Cter in SUMO); alternate). Residue lysine 866 forms a Glycyl lysine isopeptide (Lys-Gly) (interchain with G-Cter in SUMO2); alternate linkage. C2H2-type zinc fingers lie at residues 999 to 1021 and 1027 to 1049; these read YACDLCDKTFQKSSSLLRHKYEH and HQCQICKKAFKHKHHLIEHSRLH. The segment at 1055–1076 adopts a C2H2-type 8; atypical zinc-finger fold; it reads YQCDKCGKRFSHSGSYSQHMNH. The segment at 1117–1214 is disordered; that stretch reads TPQGYSDSEE…HEEDNMEDGM (98 aa). Serine 1122 and serine 1124 each carry phosphoserine. The segment covering 1127 to 1155 has biased composition (basic and acidic residues); it reads RESMPRDGESEKEHEKEGEDGYGKLGRQD. The segment covering 1156 to 1167 has biased composition (acidic residues); it reads GDEEFEEEEEES. Basic and acidic residues-rich tracts occupy residues 1168–1179 and 1186–1205; these read ENKSMDTDPETI and GDHSMDDSSEDGKMETKSDH. Residue serine 1203 is modified to Phosphoserine.

It belongs to the delta-EF1/ZFH-1 C2H2-type zinc-finger family. Binds activated SMAD1, activated SMAD2 and activated SMAD3; binding with SMAD4 is not detected. Interacts with CBX4 and CTBP1. Sumoylation on Lys-391 and Lys-866 is promoted by the E3 SUMO-protein ligase CBX4, and impairs interaction with CTBP1 and transcription repression activity.

The protein localises to the nucleus. The protein resides in the chromosome. Its function is as follows. Transcriptional inhibitor that binds to DNA sequence 5'-CACCT-3' in different promoters. Represses transcription of E-cadherin. Represses expression of MEOX2. The polypeptide is Zinc finger E-box-binding homeobox 2 (Homo sapiens (Human)).